The sequence spans 145 residues: Ribonuclease H (145 aa).

The 141-residue stretch at Met1 to Ala141 folds into the RNase H type-1 domain. 4 residues coordinate Mg(2+): Asp9, Glu47, Asp69, and Asp133.

Belongs to the RNase H family. As to quaternary structure, monomer. Requires Mg(2+) as cofactor.

Its subcellular location is the cytoplasm. The enzyme catalyses Endonucleolytic cleavage to 5'-phosphomonoester.. In terms of biological role, endonuclease that specifically degrades the RNA of RNA-DNA hybrids. This is Ribonuclease H from Cupriavidus pinatubonensis (strain JMP 134 / LMG 1197) (Cupriavidus necator (strain JMP 134)).